A 505-amino-acid chain; its full sequence is Trans-cinnamate 4-monooxygenase (505 aa).

Residues 3-23 form a helical membrane-spanning segment; the sequence is LLLLEKTLLGSFVAVLVAILV. (E)-cinnamate contacts are provided by residues 213 to 218 and Ala306; that span reads RSRLAQ. A heme-binding site is contributed by Cys447.

This sequence belongs to the cytochrome P450 family. The cofactor is heme.

It localises to the membrane. It carries out the reaction (E)-cinnamate + reduced [NADPH--hemoprotein reductase] + O2 = (E)-4-coumarate + oxidized [NADPH--hemoprotein reductase] + H2O + H(+). Its pathway is phenylpropanoid metabolism; trans-4-coumarate biosynthesis; trans-4-coumarate from trans-cinnamate: step 1/1. In terms of biological role, catalyzes the first oxidative step of the phenylpropanoid pathway in higher plants by transforming trans-cinnamate into p-coumarate. The compounds formed by this pathway are essential components for lignification, pollination, and defense against ultraviolet light, predators and pathogens. This is Trans-cinnamate 4-monooxygenase (CYP73A16) from Populus kitakamiensis (Aspen).